Consider the following 188-residue polypeptide: NANOG neighbor homeobox (188 aa).

Residues 28–106 form a disordered region; it reads ETILANKKQS…NEKQKQYPEK (79 aa). A compositionally biased stretch (basic and acidic residues) spans 57-106; the sequence is QNGKQKWREEGEAGRKREREKEEKNEKELQDEQENKRKRENEKQKQYPEK. Residues 102–161 constitute a DNA-binding region (homeobox); the sequence is QYPEKRLVSKSLMHTLWAKFKLNRCPTIQESLSLSFEFDMTHKQISQWFCKTRKKYNKEM.

It localises to the nucleus. This Homo sapiens (Human) protein is NANOG neighbor homeobox (NANOGNB).